The primary structure comprises 301 residues: Ubiquitin thioesterase OTU1 (301 aa).

The interval 5–83 is UBX-like; the sequence is RCKAKNGTHL…IVEEEKNKPK (79 aa). Positions 102–227 constitute an OTU domain; that stretch reads VERRVVPADN…GIHYDPLQKV (126 aa). The segment at 107 to 113 is cys-loop; that stretch reads VPADNSC. Residue aspartate 110 is part of the active site. Cysteine 113 acts as the Nucleophile in catalysis. The interval 166 to 176 is variable-loop; the sequence is IRRDDTWGGAI. The his-loop stretch occupies residues 216–220; that stretch reads YDGIH. Residue isoleucine 219 coordinates substrate. The active site involves histidine 220. The interval 244–249 is S2 site; the sequence is DVILAQ. The C2H2-type zinc finger occupies 271-295; it reads LRCMVCQTGLVGQKEAREHAKETGH. Residue histidine 295 is part of the active site.

The protein resides in the cytoplasm. It catalyses the reaction Thiol-dependent hydrolysis of ester, thioester, amide, peptide and isopeptide bonds formed by the C-terminal Gly of ubiquitin (a 76-residue protein attached to proteins as an intracellular targeting signal).. Its function is as follows. Hydrolase that can remove conjugated ubiquitin from proteins and participates in endoplasmic reticulum-associated degradation (ERAD) for misfolded lumenal proteins. May act by triming the ubiquitin chain on the associated substrate to facilitate their threading through the VCP/p97 pore. Ubiquitin moieties on substrates may present a steric impediment to the threading process when the substrate is transferred to the VCP pore and threaded through VCP's axial channel. Mediates deubiquitination of 'Lys-27'-, 'Lys-29'- and 'Lys-33'-linked polyubiquitin chains. Also able to hydrolyze 'Lys-11'-linked ubiquitin chains. Cleaves both polyubiquitin and di-ubiquitin. This is Ubiquitin thioesterase OTU1 (yod1) from Danio rerio (Zebrafish).